The chain runs to 333 residues: Elongation factor Ts, mitochondrial (333 aa).

The transit peptide at 1 to 17 (MLRTLRPTLPSRCLRLY) directs the protein to the mitochondrion.

It belongs to the EF-Ts family.

The protein localises to the mitochondrion. Functionally, associates with the EF-Tu.GDP complex and induces the exchange of GDP to GTP. It remains bound to the aminoacyl-tRNA.EF-Tu.GTP complex up to the GTP hydrolysis stage on the ribosome. The protein is Elongation factor Ts, mitochondrial of Coprinopsis cinerea (strain Okayama-7 / 130 / ATCC MYA-4618 / FGSC 9003) (Inky cap fungus).